The primary structure comprises 274 residues: ATP synthase subunit b 2 (274 aa).

Residues 2–22 (HIDWFVLLAQLVNFLILIYLL) form a helical membrane-spanning segment.

Belongs to the ATPase B chain family. In terms of assembly, F-type ATPases have 2 components, F(1) - the catalytic core - and F(0) - the membrane proton channel. F(1) has five subunits: alpha(3), beta(3), gamma(1), delta(1), epsilon(1). F(0) has three main subunits: a(1), b(2) and c(10-14). The alpha and beta chains form an alternating ring which encloses part of the gamma chain. F(1) is attached to F(0) by a central stalk formed by the gamma and epsilon chains, while a peripheral stalk is formed by the delta and b chains.

It localises to the cell inner membrane. Functionally, f(1)F(0) ATP synthase produces ATP from ADP in the presence of a proton or sodium gradient. F-type ATPases consist of two structural domains, F(1) containing the extramembraneous catalytic core and F(0) containing the membrane proton channel, linked together by a central stalk and a peripheral stalk. During catalysis, ATP synthesis in the catalytic domain of F(1) is coupled via a rotary mechanism of the central stalk subunits to proton translocation. Its function is as follows. Component of the F(0) channel, it forms part of the peripheral stalk, linking F(1) to F(0). In Syntrophus aciditrophicus (strain SB), this protein is ATP synthase subunit b 2.